The sequence spans 580 residues: Probable RNA-binding protein CG14230 (580 aa).

The RRM domain maps to 4 to 81 (TRFFLADLPT…EKLRVSLAKE (78 aa)). The span at 89–100 (REREENQRREQG) shows a compositional bias: basic and acidic residues. Disordered regions lie at residues 89–131 (RERE…EDEE) and 173–211 (QHRKAAKQKPDANVSQAEQKRKESLNKMRQGHQQKKSAI). The span at 110 to 120 (PSSQLLVQSGQ) shows a compositional bias: polar residues. S231 is subject to Phosphoserine. Composition is skewed to acidic residues over residues 254–263 (ENDDDEEEEQ) and 298–313 (NEEEEAELEDQPEPEE). 3 disordered regions span residues 254 to 316 (ENDD…ESER), 333 to 395 (SAND…SAVS), and 463 to 520 (PFSY…IPRN). 2 stretches are compositionally biased toward basic and acidic residues: residues 348 to 358 (LRFDPAKEGHQ) and 365 to 377 (QPKEEEEKKEETS). Polar residues predominate over residues 386-395 (AGNSQASAVS). At S468 the chain carries Phosphoserine. Phosphothreonine is present on T475.

This Drosophila melanogaster (Fruit fly) protein is Probable RNA-binding protein CG14230.